Here is a 775-residue protein sequence, read N- to C-terminus: Homoaconitase, mitochondrial (775 aa).

Residues 1–29 (MQSRLMPSGGPGRRWAFLRVPSTPQRRAF) constitute a mitochondrion transit peptide. [4Fe-4S] cluster is bound by residues C392, C461, and C464.

Belongs to the aconitase/IPM isomerase family. [4Fe-4S] cluster serves as cofactor.

The protein resides in the mitochondrion. It carries out the reaction (2R,3S)-homoisocitrate = cis-homoaconitate + H2O. It participates in amino-acid biosynthesis; L-lysine biosynthesis via AAA pathway; L-alpha-aminoadipate from 2-oxoglutarate: step 3/5. In terms of biological role, catalyzes the reversible hydration of cis-homoaconitate to (2R,3S)-homoisocitrate, a step in the alpha-aminoadipate pathway for lysine biosynthesis. The protein is Homoaconitase, mitochondrial (lys4) of Aspergillus oryzae (strain ATCC 42149 / RIB 40) (Yellow koji mold).